Consider the following 421-residue polypeptide: Serine--tRNA ligase (421 aa).

L-serine is bound at residue 230 to 232 (TAE). 261–263 (RRE) serves as a coordination point for ATP. Glu-284 contacts L-serine. 348–351 (EISS) serves as a coordination point for ATP. Ser-383 is an L-serine binding site.

The protein belongs to the class-II aminoacyl-tRNA synthetase family. Type-1 seryl-tRNA synthetase subfamily. In terms of assembly, homodimer. The tRNA molecule binds across the dimer.

It localises to the cytoplasm. It catalyses the reaction tRNA(Ser) + L-serine + ATP = L-seryl-tRNA(Ser) + AMP + diphosphate + H(+). It carries out the reaction tRNA(Sec) + L-serine + ATP = L-seryl-tRNA(Sec) + AMP + diphosphate + H(+). It participates in aminoacyl-tRNA biosynthesis; selenocysteinyl-tRNA(Sec) biosynthesis; L-seryl-tRNA(Sec) from L-serine and tRNA(Sec): step 1/1. Functionally, catalyzes the attachment of serine to tRNA(Ser). Is also able to aminoacylate tRNA(Sec) with serine, to form the misacylated tRNA L-seryl-tRNA(Sec), which will be further converted into selenocysteinyl-tRNA(Sec). This Finegoldia magna (strain ATCC 29328 / DSM 20472 / WAL 2508) (Peptostreptococcus magnus) protein is Serine--tRNA ligase.